Here is a 336-residue protein sequence, read N- to C-terminus: Aspartate--ammonia ligase (336 aa).

This sequence belongs to the class-II aminoacyl-tRNA synthetase family. AsnA subfamily.

The protein localises to the cytoplasm. It carries out the reaction L-aspartate + NH4(+) + ATP = L-asparagine + AMP + diphosphate + H(+). It participates in amino-acid biosynthesis; L-asparagine biosynthesis; L-asparagine from L-aspartate (ammonia route): step 1/1. This is Aspartate--ammonia ligase from Clostridium perfringens (strain 13 / Type A).